We begin with the raw amino-acid sequence, 484 residues long: MKFIIKLFPEIMIKSDSVRKRFIKILTSNIRNVLLRETEQVAVVRNWDFIEVRAKVAEEIPLILDLLKRTPGIHHILEVQEMPFTSLHDIFEHTFAKYQNQLVDKTFCVRVRRKGKHEFSSLDVEKYVGGGLNQRIESARVKLTKPDVTVRIDINGDKMLLVEARHEGLGGYPIGTQEDVLSLISGGFDSGVSSYMFIRRGSRVHYCFFNLGGASHEIGVKQMAYHIWSRYSTSHKVRFVAINFESVVGEILEKVDNGQMGVVLKRMMVRAASQIAERFAIQAIVTGEALGQVSSQTLTNLRLIDKAADSLVLRPLITHDKEKIIALAKQIGTDDIAKSMPEFCGVISKNPTVKAIESKIVEEEGHFDFDVLEKAVQNATYLDIREIALQTEKDVVAVEATSALTEKDIILDIRSPEEMDEKPLVLAQAQVIELPFYKLSTQFAHLDQSKNYLLYCERGVMSKLQALYLKEKGYQNVKVFNLPK.

One can recognise a THUMP domain in the interval Pro61–Arg165. Residues Leu183–Ile184, Lys265, Gly287, and Gln296 each bind ATP. A disulfide bridge connects residues Cys344 and Cys456. The Rhodanese domain maps to Leu404–Pro483. Residue Cys456 is the Cysteine persulfide intermediate of the active site.

Belongs to the ThiI family.

It localises to the cytoplasm. The enzyme catalyses [ThiI sulfur-carrier protein]-S-sulfanyl-L-cysteine + a uridine in tRNA + 2 reduced [2Fe-2S]-[ferredoxin] + ATP + H(+) = [ThiI sulfur-carrier protein]-L-cysteine + a 4-thiouridine in tRNA + 2 oxidized [2Fe-2S]-[ferredoxin] + AMP + diphosphate. The catalysed reaction is [ThiS sulfur-carrier protein]-C-terminal Gly-Gly-AMP + S-sulfanyl-L-cysteinyl-[cysteine desulfurase] + AH2 = [ThiS sulfur-carrier protein]-C-terminal-Gly-aminoethanethioate + L-cysteinyl-[cysteine desulfurase] + A + AMP + 2 H(+). It functions in the pathway cofactor biosynthesis; thiamine diphosphate biosynthesis. Functionally, catalyzes the ATP-dependent transfer of a sulfur to tRNA to produce 4-thiouridine in position 8 of tRNAs, which functions as a near-UV photosensor. Also catalyzes the transfer of sulfur to the sulfur carrier protein ThiS, forming ThiS-thiocarboxylate. This is a step in the synthesis of thiazole, in the thiamine biosynthesis pathway. The sulfur is donated as persulfide by IscS. The polypeptide is tRNA sulfurtransferase (Haemophilus ducreyi (strain 35000HP / ATCC 700724)).